We begin with the raw amino-acid sequence, 930 residues long: Dual serine/threonine and tyrosine protein kinase (930 aa).

Residues 1-14 (MEGDGVPWGSEPVS) are compositionally biased toward low complexity. The tract at residues 1–22 (MEGDGVPWGSEPVSGPGPGGGG) is disordered. Coiled coils occupy residues 190 to 216 (EEDLEVQENNEDAAHVLAELEVTMHHA) and 396 to 432 (RKKENELYESLMNIANRKQEEMKDMIVETLNTMKEEL). In terms of domain architecture, Protein kinase spans 653 to 907 (PKLGQELGRG…PLLGIVQPML (255 aa)). Residues 659 to 667 (LGRGQYGVV) and lysine 682 each bind ATP. Aspartate 778 (proton acceptor) is an active-site residue.

Belongs to the protein kinase superfamily. Ser/Thr protein kinase family.

It is found in the cytoplasm. The protein resides in the cell membrane. The protein localises to the apical cell membrane. Its subcellular location is the basolateral cell membrane. It localises to the cell junction. It catalyses the reaction L-seryl-[protein] + ATP = O-phospho-L-seryl-[protein] + ADP + H(+). It carries out the reaction L-threonyl-[protein] + ATP = O-phospho-L-threonyl-[protein] + ADP + H(+). The catalysed reaction is L-tyrosyl-[protein] + ATP = O-phospho-L-tyrosyl-[protein] + ADP + H(+). Acts as a positive regulator of ERK phosphorylation downstream of fibroblast growth factor-receptor activation. Involved in the regulation of both caspase-dependent apoptosis and caspase-independent cell death. In the skin, it plays a predominant role in suppressing caspase-dependent apoptosis in response to UV stress in a range of dermal cell types. This chain is Dual serine/threonine and tyrosine protein kinase (DSTYK), found in Pan troglodytes (Chimpanzee).